A 209-amino-acid chain; its full sequence is Thymidine kinase (209 aa).

ATP is bound by residues 9 to 16 and 88 to 91; these read AAMNAGKS and DEAQ. Catalysis depends on E89, which acts as the Proton acceptor. Zn(2+) is bound by residues C146, C148, C183, and H186.

The protein belongs to the thymidine kinase family. In terms of assembly, homotetramer.

It is found in the cytoplasm. The catalysed reaction is thymidine + ATP = dTMP + ADP + H(+). This chain is Thymidine kinase, found in Legionella pneumophila (strain Lens).